Consider the following 1306-residue polypeptide: MQFPFACLLSTLVISGSLARASPFDFIFGNGTQQAQSQSESQGQVSFTNEASQDSSTTSLVTAYSQGVHSHQSATIVSATISSLPSTWYDASSTSQTSVSYASQESDYAVNQNSWSASTNQLPSTSTTSYYAPTFSTSADFAASSVNAASDVSTASVPIDTSANSIPFTTTSNIETTTSAPLTSDTPLISTSTMSAADNVFSSANPISASLTTTDSSESFDQTSTAGAIPVQSSADFSSSSEILVQSSADFSSPSSPTTTDISLSAAPLQTSESSSFTTASAALPVSSTDVDGSSASPVVSMSAAGQIASSSSTDNPTMSETFSLTSTEVDGSDVSSTVSALLSAPFLQTSTSNSFSIVSPSVSFVPSQSSSDVASSSTANVVSSSFSDIPPQTSTSGSVVSVAQSASALAFQSSTEVYGASASSTMSSLLSTTSLQSTTLDSSSLASSSASSSDLTDYGVSSTASIPLLSASEQASTSSSFSVVSPSVSFVPSQSSSDVASTSAPSVVSSSFSYTSLQAGGSSMTNPSSSTIVYSSSTGSSEESAASTASATLSGSSSTYMAGNLQSQPPSTSSLLSESQATSTSAVLASSSVSTTSPYTTAGGASTEASSLISSTSAETSQVSYSQSTTALQTSSFASSSTTEGSETSSQGFSTSSVLVQMPSSISSEFSPSQTTTQMNSASSSSQYTISSTGILSQVSDTSVSYTTSSSSVSQVSDTPVSYTTSSSSVSQVSDTPVSYTTSSSSVSQVSDTPVSYTTSSSSVSQVSDTPVSYTTSSSSVSQVSDTSVPSTSSRSSVSQVSDTPVPSTSSRSSVSQTSSSLQPTTTSSQRFTISTHGALSESSSVSQQASEITSSINATASEYHSIQTTAATQSTTLSFTDANSSSASAPLEVATSTPTPSSKASSLLLTPSTSSLSQVATNTNVQTSLTTESTTVLEPSTTNSSSTFSLVTSSDNNWWIPTELITQAPEAASTASSTVGGTQTMTLPHAIAAATQVPEPEGYTLITIGFKKALNYEFVVSEPKSSAQIFGYLPEALNTPFKNVFTNITVLQIVPLQDDSLNYLVSVAEVYFPTAEIEELSNLITNSSSAFYTDGMGTAKSMAAMVDSSIPLTGLLHDSNSNSGGSSDGSSSSNSNSGSSGSGSNSNSGVSSSSGNSYQDAGTLEYSSKSNSNVSTSSKSKKKIIGLVIGVVVGGCLYILFMIFAFKYIIRRRIQSQEIIKNPEISSISSSEFGGEKNYNNEKRMSVQESITQSMRIQNWMDDSYYGHGLTNNDSTPTRHNTSSSIPKISRPIASQNSLGWNEV.

Residues 1-21 (MQFPFACLLSTLVISGSLARA) form the signal peptide. Over 22–1185 (SPFDFIFGNG…VSTSSKSKKK (1164 aa)) the chain is Extracellular. N-linked (GlcNAc...) asparagine glycosylation occurs at N30. Disordered stretches follow at residues 248–267 (SADF…LSAA), 519–539 (QAGG…SSST), 561–580 (YMAG…LSES), 665–685 (SSIS…SASS), and 709–849 (TSSS…SVSQ). Residues 519–528 (QAGGSSMTNP) are compositionally biased toward polar residues. Residues 529 to 539 (SSSTIVYSSST) are compositionally biased toward low complexity. 2 stretches are compositionally biased toward low complexity: residues 665–674 (SSISSEFSPS) and 709–831 (TSSS…TSSQ). Tandem repeats lie at residues 698 to 714 (SQVS…SSSV), 715 to 731 (SQVS…SSSV), 732 to 748 (SQVS…SSSV), 749 to 765 (SQVS…SSSV), 766 to 782 (SQVS…SSSV), 783 to 799 (SQVS…RSSV), and 800 to 816 (SQVS…RSSV). The tract at residues 698–816 (SQVSDTSVSY…VPSTSSRSSV (119 aa)) is 7 X 17 AA tandem repeats. N859, N885, N945, N1049, and N1088 each carry an N-linked (GlcNAc...) asparagine glycan. A disordered region spans residues 1123-1158 (SNSGGSSDGSSSSNSNSGSSGSGSNSNSGVSSSSGN). A glycan (N-linked (GlcNAc...) asparagine) is linked at N1175. Residues 1186–1206 (IIGLVIGVVVGGCLYILFMIF) form a helical membrane-spanning segment. Residues 1207–1306 (AFKYIIRRRI…SQNSLGWNEV (100 aa)) are Cytoplasmic-facing. Residues 1272–1291 (LTNNDSTPTRHNTSSSIPKI) form a disordered region. Phosphoserine is present on S1300.

This sequence belongs to the HKR1/MSB2 family. As to quaternary structure, interacts with CDC42 and SHO1. O-glycosylated in the Ser/Thr-rich regions.

It localises to the cell membrane. Its function is as follows. Plasma membrane signaling mucin that promotes activation of the MAPK for the filamentous growth pathway. Partially redundant with the SHO1 osmosensing branch for the activation of STE11. The polypeptide is Signaling mucin MSB2 (MSB2) (Saccharomyces cerevisiae (strain ATCC 204508 / S288c) (Baker's yeast)).